The chain runs to 69 residues: Cytochrome c oxidase subunit 8A, mitochondrial (69 aa).

The transit peptide at 1–25 (MSSLTPLLLRSLTGPARRLMVPRAQ) directs the protein to the mitochondrion. Residues 2-19 (SSLTPLLLRSLTGPARRL) carry the SIFI-degron motif. Topologically, residues 26–36 (VHSKPPREQLG) are mitochondrial matrix. Residues 37 to 60 (VLDITIGLTSCFVCCLLPAGWVLS) traverse the membrane as a helical segment. Over 61 to 69 (HLESYKKRE) the chain is Mitochondrial intermembrane.

The protein belongs to the cytochrome c oxidase VIII family. Component of the cytochrome c oxidase (complex IV, CIV), a multisubunit enzyme composed of 14 subunits. The complex is composed of a catalytic core of 3 subunits MT-CO1, MT-CO2 and MT-CO3, encoded in the mitochondrial DNA, and 11 supernumerary subunits COX4I, COX5A, COX5B, COX6A, COX6B, COX6C, COX7A, COX7B, COX7C, COX8 and NDUFA4, which are encoded in the nuclear genome. The complex exists as a monomer or a dimer and forms supercomplexes (SCs) in the inner mitochondrial membrane with NADH-ubiquinone oxidoreductase (complex I, CI) and ubiquinol-cytochrome c oxidoreductase (cytochrome b-c1 complex, complex III, CIII), resulting in different assemblies (supercomplex SCI(1)III(2)IV(1) and megacomplex MCI(2)III(2)IV(2)). Post-translationally, in response to mitochondrial stress, the precursor protein is ubiquitinated by the SIFI complex in the cytoplasm before mitochondrial import, leading to its degradation. Within the SIFI complex, UBR4 initiates ubiquitin chain that are further elongated or branched by KCMF1.

The protein localises to the mitochondrion inner membrane. It participates in energy metabolism; oxidative phosphorylation. In terms of biological role, component of the cytochrome c oxidase, the last enzyme in the mitochondrial electron transport chain which drives oxidative phosphorylation. The respiratory chain contains 3 multisubunit complexes succinate dehydrogenase (complex II, CII), ubiquinol-cytochrome c oxidoreductase (cytochrome b-c1 complex, complex III, CIII) and cytochrome c oxidase (complex IV, CIV), that cooperate to transfer electrons derived from NADH and succinate to molecular oxygen, creating an electrochemical gradient over the inner membrane that drives transmembrane transport and the ATP synthase. Cytochrome c oxidase is the component of the respiratory chain that catalyzes the reduction of oxygen to water. Electrons originating from reduced cytochrome c in the intermembrane space (IMS) are transferred via the dinuclear copper A center (CU(A)) of subunit 2 and heme A of subunit 1 to the active site in subunit 1, a binuclear center (BNC) formed by heme A3 and copper B (CU(B)). The BNC reduces molecular oxygen to 2 water molecules using 4 electrons from cytochrome c in the IMS and 4 protons from the mitochondrial matrix. This chain is Cytochrome c oxidase subunit 8A, mitochondrial (Cox8a), found in Rattus norvegicus (Rat).